We begin with the raw amino-acid sequence, 258 residues long: Imidazole glycerol phosphate synthase subunit HisF (258 aa).

Active-site residues include Asp-11 and Asp-130.

Belongs to the HisA/HisF family. As to quaternary structure, heterodimer of HisH and HisF.

The protein resides in the cytoplasm. It catalyses the reaction 5-[(5-phospho-1-deoxy-D-ribulos-1-ylimino)methylamino]-1-(5-phospho-beta-D-ribosyl)imidazole-4-carboxamide + L-glutamine = D-erythro-1-(imidazol-4-yl)glycerol 3-phosphate + 5-amino-1-(5-phospho-beta-D-ribosyl)imidazole-4-carboxamide + L-glutamate + H(+). Its pathway is amino-acid biosynthesis; L-histidine biosynthesis; L-histidine from 5-phospho-alpha-D-ribose 1-diphosphate: step 5/9. Its function is as follows. IGPS catalyzes the conversion of PRFAR and glutamine to IGP, AICAR and glutamate. The HisF subunit catalyzes the cyclization activity that produces IGP and AICAR from PRFAR using the ammonia provided by the HisH subunit. This chain is Imidazole glycerol phosphate synthase subunit HisF, found in Xanthomonas oryzae pv. oryzae (strain MAFF 311018).